The sequence spans 261 residues: Putative ketoacyl reductase (261 aa).

Positions 15, 16, 18, 38, 39, 63, 64, 90, 157, 161, 190, and 192 each coordinate NADP(+). Tyr-157 functions as the Proton acceptor in the catalytic mechanism.

It belongs to the short-chain dehydrogenases/reductases (SDR) family. In terms of assembly, homotetramer.

It functions in the pathway antibiotic biosynthesis; actinorhodin biosynthesis. This Streptomyces coelicolor (strain ATCC BAA-471 / A3(2) / M145) protein is Putative ketoacyl reductase (actIII).